A 406-amino-acid chain; its full sequence is MMKSLASAVGGKTARACDSCVKRRARWYCAADDAFLCHACDGSVHSANPLARRHERVRLKSASAGKYRHASPPHQATWHQGFTRKARTPRGGKKSHTMVFHDLVPEMSTEDQAESYEVEEQLIFEVPVMNSMVEEQCFNQSLEKQNEFPMMPLSFKSSDEEDDDNAESCLNGLFPTDMELAQFTADVETLLGGGDREFHSIEELGLGEMLKIEKEEVEEEGVVTREVHDQDEGDETSPFEISFDYEYTHKTTFDEGEEDEKEDVMKNVMEMGVNEMSGGIKEEKKEKALMLRLDYESVISTWGGQGIPWTARVPSEIDLDMVCFPTHTMGESGAEAHHHNHFRGLGLHLGDAGDGGREARVSRYREKRRTRLFSKKIRYEVRKLNAEKRPRMKGRFVKRSSIGVAH.

Zn(2+)-binding residues include Cys17, Cys20, Cys40, and His45. A B box-type; atypical zinc finger spans residues 17–59 (CDSCVKRRARWYCAADDAFLCHACDGSVHSANPLARRHERVRL). A disordered region spans residues 63–95 (SAGKYRHASPPHQATWHQGFTRKARTPRGGKKS). Basic residues predominate over residues 82 to 95 (FTRKARTPRGGKKS). The CCT domain maps to 357–399 (REARVSRYREKRRTRLFSKKIRYEVRKLNAEKRPRMKGRFVKR).

This sequence belongs to the CONSTANS family.

It localises to the nucleus. This is Zinc finger protein CONSTANS-LIKE 6 (COL6) from Arabidopsis thaliana (Mouse-ear cress).